Consider the following 266-residue polypeptide: Decarboxylase tropJ (266 aa).

Glutamate 80 acts as the Proton acceptor in catalysis. The Zn(2+) site is built by glutamate 80, histidine 99, histidine 101, and histidine 180.

The protein belongs to the aldolase class II family. It depends on Zn(2+) as a cofactor.

Its pathway is secondary metabolite biosynthesis. In terms of biological role, decarboxylase; part of the gene cluster that mediates the biosynthesis of the tropolone class of fungal maleic anhydrides. The pathway begins with the synthesis of 3-methylorcinaldehyde by the non-reducing polyketide synthase (PKS) tropA. 3-methylorcinaldehyde is the substrate for the FAD-dependent monooxygenase tropB to yield a dearomatized hydroxycyclohexadione. The 2-oxoglutarate-dependent dioxygenase tropC then performs the oxidative ring expansion to provide the first tropolone metabolite stipitaldehyde. Trop D converts stipitaldehyde into stipitacetal which is in turn converted to stipitalide by the short-chain dehydrogenase/reductase tropE. The next steps involve tropF, tropG, tropH, tropI and tropJ to form successive tropolone maleic anhydrides including stipitaldehydic, stipitatonic and stipitatic acids. This is Decarboxylase tropJ from Talaromyces stipitatus (strain ATCC 10500 / CBS 375.48 / QM 6759 / NRRL 1006) (Penicillium stipitatum).